Consider the following 277-residue polypeptide: Large ribosomal subunit protein uL2 (277 aa).

Residues 223–277 (VAMNPVDHPHGGGEGRTSTGRHPVTPWGKRTLGKKTRKRKASDKYIIRSRRARKR) are disordered. Residues 253–277 (TLGKKTRKRKASDKYIIRSRRARKR) show a composition bias toward basic residues.

Belongs to the universal ribosomal protein uL2 family. In terms of assembly, part of the 50S ribosomal subunit. Forms a bridge to the 30S subunit in the 70S ribosome.

Its function is as follows. One of the primary rRNA binding proteins. Required for association of the 30S and 50S subunits to form the 70S ribosome, for tRNA binding and peptide bond formation. It has been suggested to have peptidyltransferase activity; this is somewhat controversial. Makes several contacts with the 16S rRNA in the 70S ribosome. The sequence is that of Large ribosomal subunit protein uL2 from Halothermothrix orenii (strain H 168 / OCM 544 / DSM 9562).